The following is a 473-amino-acid chain: Photosystem II CP43 reaction center protein (473 aa).

Residues 1-14 constitute a propeptide that is removed on maturation; the sequence is MKTLYSLRRFYHVE. Threonine 15 carries the N-acetylthreonine modification. Position 15 is a phosphothreonine (threonine 15). 5 helical membrane-spanning segments follow: residues 69–93, 134–155, 178–200, 255–275, and 291–312; these read LFEV…PHLA, LLGP…KDRN, KALY…RKIT, KPFA…LSYS, and CFNN…ASQA. Glutamate 367 lines the [CaMn4O5] cluster pocket. Residues 447–471 form a helical membrane-spanning segment; it reads RARAAAAGFEKGIDRDFEPVLSMTP.

The protein belongs to the PsbB/PsbC family. PsbC subfamily. PSII is composed of 1 copy each of membrane proteins PsbA, PsbB, PsbC, PsbD, PsbE, PsbF, PsbH, PsbI, PsbJ, PsbK, PsbL, PsbM, PsbT, PsbX, PsbY, PsbZ, Psb30/Ycf12, at least 3 peripheral proteins of the oxygen-evolving complex and a large number of cofactors. It forms dimeric complexes. It depends on Binds multiple chlorophylls and provides some of the ligands for the Ca-4Mn-5O cluster of the oxygen-evolving complex. It may also provide a ligand for a Cl- that is required for oxygen evolution. PSII binds additional chlorophylls, carotenoids and specific lipids. as a cofactor.

The protein resides in the plastid. The protein localises to the chloroplast thylakoid membrane. One of the components of the core complex of photosystem II (PSII). It binds chlorophyll and helps catalyze the primary light-induced photochemical processes of PSII. PSII is a light-driven water:plastoquinone oxidoreductase, using light energy to abstract electrons from H(2)O, generating O(2) and a proton gradient subsequently used for ATP formation. The polypeptide is Photosystem II CP43 reaction center protein (Jasminum nudiflorum (Winter jasmine)).